Reading from the N-terminus, the 263-residue chain is Microtubule-associated protein RP/EB family member 1 (263 aa).

The 103-residue stretch at 14-116 (NLSRHDMLAW…FVQWFKKFFD (103 aa)) folds into the Calponin-homology (CH) domain. The 71-residue stretch at 180–250 (KKAAGDDESA…LYATDEGFVI (71 aa)) folds into the EB1 C-terminal domain.

It belongs to the MAPRE family.

It is found in the cytoplasm. The protein localises to the cytoskeleton. Its subcellular location is the microtubule organizing center. The protein resides in the centrosome. It localises to the golgi apparatus. It is found in the spindle. The protein localises to the spindle pole. Its function is as follows. Plus-end tracking protein (+TIP) that binds to the plus-end of microtubules and regulates the dynamics of the microtubule cytoskeleton. Promotes cytoplasmic microtubule nucleation and elongation. Involved in mitotic spindle positioning by stabilizing microtubules and promoting dynamic connection between astral microtubules and the cortex during mitotic chromosome segregation. The chain is Microtubule-associated protein RP/EB family member 1 (MAPRE1) from Coturnix coturnix (Common quail).